The chain runs to 175 residues: Large ribosomal subunit protein uL10 (175 aa).

It belongs to the universal ribosomal protein uL10 family. In terms of assembly, part of the ribosomal stalk of the 50S ribosomal subunit. The N-terminus interacts with L11 and the large rRNA to form the base of the stalk. The C-terminus forms an elongated spine to which L12 dimers bind in a sequential fashion forming a multimeric L10(L12)X complex.

In terms of biological role, forms part of the ribosomal stalk, playing a central role in the interaction of the ribosome with GTP-bound translation factors. The protein is Large ribosomal subunit protein uL10 of Psychrobacter cryohalolentis (strain ATCC BAA-1226 / DSM 17306 / VKM B-2378 / K5).